The sequence spans 350 residues: Nuclear pore complex-interacting protein family member A3 (350 aa).

The segment at 306-325 (KTPPECLLTPLPPSAPPSVD) is disordered.

Belongs to the NPIP family.

This chain is Nuclear pore complex-interacting protein family member A3 (NPIPA3), found in Homo sapiens (Human).